A 305-amino-acid polypeptide reads, in one-letter code: Transcription factor bHLH18 (305 aa).

Residues 41–67 (LKTTHISPNLHPFSSSNPPPPKHQPSS) are disordered. Polar residues predominate over residues 44 to 56 (THISPNLHPFSSS). In terms of domain architecture, bHLH spans 122-171 (SNAQDHILAERKRREKLTQRFVALSALIPGLKKMDKASVLGDAIKHIKYL). A disordered region spans residues 201-224 (DENHQPSSSSSSDGNRNSSSSNLP). Over residues 207-222 (SSSSSSDGNRNSSSSN) the composition is skewed to low complexity.

In terms of assembly, homodimer. Expressed in roots.

It localises to the nucleus. The polypeptide is Transcription factor bHLH18 (BHLH18) (Arabidopsis thaliana (Mouse-ear cress)).